The following is a 497-amino-acid chain: uncharacterized protein (497 aa).

Residue 266-273 participates in ATP binding; that stretch reads GIQGTGKS.

This sequence belongs to the AAA ATPase family. Highly divergent.

It is found in the plastid. The protein localises to the chloroplast. This is an uncharacterized protein from Trieres chinensis (Marine centric diatom).